We begin with the raw amino-acid sequence, 448 residues long: Glucose-6-phosphate isomerase (448 aa).

Glu290 acts as the Proton donor in catalysis. Catalysis depends on residues His311 and Lys425.

This sequence belongs to the GPI family.

The protein resides in the cytoplasm. The enzyme catalyses alpha-D-glucose 6-phosphate = beta-D-fructose 6-phosphate. It functions in the pathway carbohydrate biosynthesis; gluconeogenesis. The protein operates within carbohydrate degradation; glycolysis; D-glyceraldehyde 3-phosphate and glycerone phosphate from D-glucose: step 2/4. Catalyzes the reversible isomerization of glucose-6-phosphate to fructose-6-phosphate. The chain is Glucose-6-phosphate isomerase from Acetivibrio thermocellus (strain ATCC 27405 / DSM 1237 / JCM 9322 / NBRC 103400 / NCIMB 10682 / NRRL B-4536 / VPI 7372) (Clostridium thermocellum).